A 1308-amino-acid polypeptide reads, in one-letter code: D-lysergyl-peptide-synthetase subunit 2 (1308 aa).

The tract at residues glutamate 261 to arginine 658 is adenylation (A) domain. One can recognise a Carrier domain in the interval isoleucine 803–lysine 871. The residue at position 835 (serine 835) is an O-(pantetheine 4'-phosphoryl)serine. The segment at glutamate 910–aspartate 1299 is condensation (C) domain.

The protein belongs to the NRP synthetase family.

It participates in alkaloid biosynthesis; ergot alkaloid biosynthesis. Its function is as follows. D-lysergyl-peptide-synthetase subunit 2; part of the gene cluster that mediates the biosynthesis of fungal ergot alkaloid. DmaW catalyzes the first step of ergot alkaloid biosynthesis by condensing dimethylallyl diphosphate (DMAP) and tryptophan to form 4-dimethylallyl-L-tryptophan. The second step is catalyzed by the methyltransferase easF that methylates 4-dimethylallyl-L-tryptophan in the presence of S-adenosyl-L-methionine, resulting in the formation of 4-dimethylallyl-L-abrine. The catalase easC and the FAD-dependent oxidoreductase easE then transform 4-dimethylallyl-L-abrine to chanoclavine-I which is further oxidized by EasD in the presence of NAD(+), resulting in the formation of chanoclavine-I aldehyde. Agroclavine dehydrogenase easG then mediates the conversion of chanoclavine-I aldehyde to agroclavine via a non-enzymatic adduct reaction: the substrate is an iminium intermediate that is formed spontaneously from chanoclavine-I aldehyde in the presence of glutathione. The presence of easA is not required to complete this reaction. Further conversion of agroclavine to paspalic acid is a two-step process involving oxidation of agroclavine to elymoclavine and of elymoclavine to paspalic acid, the second step being performed by the elymoclavine oxidase cloA. Paspalic acid is then further converted to D-lysergic acid. Ergopeptines are assembled from D-lysergic acid and three different amino acids by the D-lysergyl-peptide-synthetases composed each of a monomudular and a trimodular nonribosomal peptide synthetase subunit. LpsB and lpsC encode the monomodular subunits responsible for D-lysergic acid activation and incorporation into the ergopeptine backbone. LpsA1 and A2 subunits encode the trimodular nonribosomal peptide synthetase assembling the tripeptide portion of ergopeptines. LpsA1 is responsible for formation of the major ergopeptine, ergotamine, and lpsA2 for alpha-ergocryptine, the minor ergopeptine of the total alkaloid mixture elaborated by C.purpurea. D-lysergyl-tripeptides are assembled by the nonribosomal peptide synthetases and released as N-(D-lysergyl-aminoacyl)-lactams. Cyclolization of the D-lysergyl-tripeptides is performed by the Fe(2+)/2-ketoglutarate-dependent dioxygenase easH which introduces a hydroxyl group into N-(D-lysergyl-aminoacyl)-lactam at alpha-C of the aminoacyl residue followed by spontaneous condensation with the terminal lactam carbonyl group. In Claviceps purpurea (Ergot fungus), this protein is D-lysergyl-peptide-synthetase subunit 2.